The following is a 621-amino-acid chain: UvrABC system protein C (621 aa).

The 80-residue stretch at 21-100 folds into the GIY-YIG domain; it reads AEPGVYLMRD…IKTYQPPYNV (80 aa). Positions 210–245 constitute a UVR domain; it reads DELIRELKEKMAQAAQQENYEAAARYRDQIRGLEQL.

The protein belongs to the UvrC family. In terms of assembly, interacts with UvrB in an incision complex.

The protein resides in the cytoplasm. Its function is as follows. The UvrABC repair system catalyzes the recognition and processing of DNA lesions. UvrC both incises the 5' and 3' sides of the lesion. The N-terminal half is responsible for the 3' incision and the C-terminal half is responsible for the 5' incision. This chain is UvrABC system protein C, found in Synechococcus sp. (strain JA-3-3Ab) (Cyanobacteria bacterium Yellowstone A-Prime).